The following is a 217-amino-acid chain: RING-H2 finger protein ATL70 (217 aa).

The helical transmembrane segment at 61–81 (IGGFRYGIGVSIGVLLLITTI) threads the bilayer. The segment at 147–189 (CAICLGDYKGKHLLRQLPDCNHLFHLKCIDTWLRLNPTCPVCR) adopts an RING-type; atypical zinc-finger fold.

This sequence belongs to the RING-type zinc finger family. ATL subfamily.

The protein resides in the membrane. It catalyses the reaction S-ubiquitinyl-[E2 ubiquitin-conjugating enzyme]-L-cysteine + [acceptor protein]-L-lysine = [E2 ubiquitin-conjugating enzyme]-L-cysteine + N(6)-ubiquitinyl-[acceptor protein]-L-lysine.. It participates in protein modification; protein ubiquitination. This chain is RING-H2 finger protein ATL70 (ATL70), found in Arabidopsis thaliana (Mouse-ear cress).